We begin with the raw amino-acid sequence, 369 residues long: Septin-5 (369 aa).

Thr13 is subject to Phosphothreonine. The Septin-type G domain occupies 41-314; it reads KGFDFTLMVA…ENYRAHCIQQ (274 aa). The tract at residues 51-58 is G1 motif; that stretch reads GESGLGKS. GTP is bound by residues 51 to 58, Thr85, and Gly111; that span reads GESGLGKS. The segment at 108 to 111 is G3 motif; that stretch reads DTPG. Omega-N-methylarginine is present on Arg168. Residues 189-192 are G4 motif; the sequence is AKAD. 190–198 is a GTP binding site; sequence KADCLVPSE. Ser225 bears the Phosphoserine mark. Gly248 and Arg263 together coordinate GTP. Position 327 is a phosphoserine (Ser327). Thr336 bears the Phosphothreonine mark. The stretch at 338–369 forms a coiled coil; the sequence is DAETEKLIRMKDEELRRMQEMLQRMKQQMQDQ.

Belongs to the TRAFAC class TrmE-Era-EngA-EngB-Septin-like GTPase superfamily. Septin GTPase family. In terms of assembly, septins polymerize into heterooligomeric protein complexes that form filaments, and can associate with cellular membranes, actin filaments and microtubules. GTPase activity is required for filament formation. Interacts with SEPTIN2 and SEPTIN5. In platelets, associated with a complex containing STX4. Interacts with PRKN; this interaction leads to SEPTIN5 ubiquitination and degradation. Interacts with DYRK1A. Interacts with STX1A; in the cerebellar cortex. In terms of processing, phosphorylated by DYRK1A. In platelets, phosphorylated in response to thrombin, phorbol-12-myristate-13-acetate and collagen. As to expression, expressed at high levels in the CNS, as well as in heart and platelets (at protein level).

The protein localises to the cytoplasm. The protein resides in the cytoskeleton. Functionally, filament-forming cytoskeletal GTPase. May play a role in cytokinesis (Potential). May play a role in platelet secretion. The sequence is that of Septin-5 from Homo sapiens (Human).